The chain runs to 23 residues: GLLQTITEKLKEFAGGLVTGVQS.

It belongs to the frog skin active peptide (FSAP) family. Aurein subfamily. As to expression, expressed by the skin dorsal glands.

The protein localises to the secreted. In terms of biological role, has no antimicrobial or anticancer activity. In Ranoidea aurea (Green and golden bell frog), this protein is Aurein-4.3.